A 490-amino-acid polypeptide reads, in one-letter code: Chromosomal replication initiator protein DnaA (490 aa).

Positions 1 to 75 (MAVSSDAEQK…SELWKQEDAD (75 aa)) are domain I, interacts with DnaA modulators. The tract at residues 75 to 145 (DLLKIEIVVR…SEFRHNVLGS (71 aa)) is domain II. The segment at 146-368 (PLDPRYTFGS…GAFNQLLFRQ (223 aa)) is domain III, AAA+ region. ATP is bound by residues G192, G194, K195, and T196. Residues 369-490 (SFEPQITIDR…LLRRLINDQA (122 aa)) are domain IV, binds dsDNA.

The protein belongs to the DnaA family. Oligomerizes as a right-handed, spiral filament on DNA at oriC.

It localises to the cytoplasm. Its function is as follows. Plays an essential role in the initiation and regulation of chromosomal replication. ATP-DnaA binds to the origin of replication (oriC) to initiate formation of the DNA replication initiation complex once per cell cycle. Binds the DnaA box (a 9 base pair repeat at the origin) and separates the double-stranded (ds)DNA. Forms a right-handed helical filament on oriC DNA; dsDNA binds to the exterior of the filament while single-stranded (ss)DNA is stabiized in the filament's interior. The ATP-DnaA-oriC complex binds and stabilizes one strand of the AT-rich DNA unwinding element (DUE), permitting loading of DNA polymerase. After initiation quickly degrades to an ADP-DnaA complex that is not apt for DNA replication. Binds acidic phospholipids. This Mesorhizobium japonicum (strain LMG 29417 / CECT 9101 / MAFF 303099) (Mesorhizobium loti (strain MAFF 303099)) protein is Chromosomal replication initiator protein DnaA.